Reading from the N-terminus, the 188-residue chain is ATP synthase subunit b, chloroplastic (188 aa).

A helical transmembrane segment spans residues 35-57; the sequence is LINLAVVIGVLVYFGKGVLTTLL.

The protein belongs to the ATPase B chain family. F-type ATPases have 2 components, F(1) - the catalytic core - and F(0) - the membrane proton channel. F(1) has five subunits: alpha(3), beta(3), gamma(1), delta(1), epsilon(1). F(0) has four main subunits: a(1), b(1), b'(1) and c(10-14). The alpha and beta chains form an alternating ring which encloses part of the gamma chain. F(1) is attached to F(0) by a central stalk formed by the gamma and epsilon chains, while a peripheral stalk is formed by the delta, b and b' chains.

It localises to the plastid. Its subcellular location is the chloroplast thylakoid membrane. Functionally, f(1)F(0) ATP synthase produces ATP from ADP in the presence of a proton or sodium gradient. F-type ATPases consist of two structural domains, F(1) containing the extramembraneous catalytic core and F(0) containing the membrane proton channel, linked together by a central stalk and a peripheral stalk. During catalysis, ATP synthesis in the catalytic domain of F(1) is coupled via a rotary mechanism of the central stalk subunits to proton translocation. Component of the F(0) channel, it forms part of the peripheral stalk, linking F(1) to F(0). The chain is ATP synthase subunit b, chloroplastic from Zygnema circumcarinatum (Green alga).